The primary structure comprises 176 residues: MDLPGPIHDILLVFLGLGLILGGLGVVLLTNPIYSAFSLGLVLVCISLFHIPSNSYFVAAAQLLIYVGAVNVLIVFAVMFMNGSEYSNDFHLWTVGDGVTSLVCTSILFSLITTIWNTSWYGIIWTTRSNQIIEQDLTSNVQQIGIRLATDFYLPFELISIILLAALIGAIAMARQ.

A run of 5 helical transmembrane segments spans residues 10 to 30 (ILLV…VLLT), 32 to 52 (PIYS…FHIP), 61 to 81 (AQLL…VMFM), 107 to 127 (ILFS…IWTT), and 152 to 172 (FYLP…GAIA).

The protein belongs to the complex I subunit 6 family. In terms of assembly, NDH is composed of at least 16 different subunits, 5 of which are encoded in the nucleus.

It localises to the plastid. The protein localises to the chloroplast thylakoid membrane. It carries out the reaction a plastoquinone + NADH + (n+1) H(+)(in) = a plastoquinol + NAD(+) + n H(+)(out). It catalyses the reaction a plastoquinone + NADPH + (n+1) H(+)(in) = a plastoquinol + NADP(+) + n H(+)(out). Its function is as follows. NDH shuttles electrons from NAD(P)H:plastoquinone, via FMN and iron-sulfur (Fe-S) centers, to quinones in the photosynthetic chain and possibly in a chloroplast respiratory chain. The immediate electron acceptor for the enzyme in this species is believed to be plastoquinone. Couples the redox reaction to proton translocation, and thus conserves the redox energy in a proton gradient. This Calycanthus floridus var. glaucus (Eastern sweetshrub) protein is NAD(P)H-quinone oxidoreductase subunit 6, chloroplastic (ndhG).